Consider the following 231-residue polypeptide: Ribonuclease HII (231 aa).

The region spanning 33–222 is the RNase H type-2 domain; it reads WPVAGADEAG…FREAQEQPLA (190 aa). Residues Asp-39, Glu-40, and Asp-130 each contribute to the a divalent metal cation site.

This sequence belongs to the RNase HII family. Requires Mn(2+) as cofactor. Mg(2+) is required as a cofactor.

The protein localises to the cytoplasm. It carries out the reaction Endonucleolytic cleavage to 5'-phosphomonoester.. Its function is as follows. Endonuclease that specifically degrades the RNA of RNA-DNA hybrids. This chain is Ribonuclease HII, found in Sinorhizobium fredii (strain NBRC 101917 / NGR234).